The primary structure comprises 124 residues: Small ribosomal subunit protein bS6 (124 aa).

Residues 100-124 (KERRAARQKTGETQENVSQEESSTN) form a disordered region. Over residues 110–124 (GETQENVSQEESSTN) the composition is skewed to polar residues.

The protein belongs to the bacterial ribosomal protein bS6 family.

Its function is as follows. Binds together with bS18 to 16S ribosomal RNA. This chain is Small ribosomal subunit protein bS6, found in Fervidobacterium nodosum (strain ATCC 35602 / DSM 5306 / Rt17-B1).